Here is a 324-residue protein sequence, read N- to C-terminus: Methionyl-tRNA formyltransferase (324 aa).

114 to 117 provides a ligand contact to (6S)-5,6,7,8-tetrahydrofolate; the sequence is SLLP.

It belongs to the Fmt family.

It carries out the reaction L-methionyl-tRNA(fMet) + (6R)-10-formyltetrahydrofolate = N-formyl-L-methionyl-tRNA(fMet) + (6S)-5,6,7,8-tetrahydrofolate + H(+). In terms of biological role, attaches a formyl group to the free amino group of methionyl-tRNA(fMet). The formyl group appears to play a dual role in the initiator identity of N-formylmethionyl-tRNA by promoting its recognition by IF2 and preventing the misappropriation of this tRNA by the elongation apparatus. The protein is Methionyl-tRNA formyltransferase of Phocaeicola vulgatus (strain ATCC 8482 / DSM 1447 / JCM 5826 / CCUG 4940 / NBRC 14291 / NCTC 11154) (Bacteroides vulgatus).